Consider the following 296-residue polypeptide: Cytidine deaminase (296 aa).

2 CMP/dCMP-type deaminase domains span residues 47–167 (TEAE…FGPK) and 186–296 (DSSD…VDPV). 88–90 (NLE) lines the substrate pocket. H101 is a binding site for Zn(2+). E103 acts as the Proton donor in catalysis. Zn(2+) is bound by residues C128 and C131.

The protein belongs to the cytidine and deoxycytidylate deaminase family. In terms of assembly, homodimer. Zn(2+) serves as cofactor.

It catalyses the reaction cytidine + H2O + H(+) = uridine + NH4(+). The catalysed reaction is 2'-deoxycytidine + H2O + H(+) = 2'-deoxyuridine + NH4(+). In terms of biological role, this enzyme scavenges exogenous and endogenous cytidine and 2'-deoxycytidine for UMP synthesis. This Shewanella sp. (strain W3-18-1) protein is Cytidine deaminase.